The following is a 254-amino-acid chain: Proteasome activator complex subunit 3 (254 aa).

Position 2 is an N-acetylalanine (Ala-2). A phosphoserine mark is found at Ser-17 and Ser-24. N6-acetyllysine; by P300/CBP is present on Lys-195. Ser-247 is subject to Phosphoserine; by CHEK2.

It belongs to the PA28 family. As to quaternary structure, homoheptamer; the stability of the heptamer is essential for the specific activation of the trypsine-like subunit and inhibition of the chymotrypsin-like and postglutamyl-preferring (PGPH) subunits of the proteasome. Interacts with p53/TP53, MDM2 and MAP3K3. Associates with the proteasome. Interacts with CCAR2. Interacts with PSME3IP1 (via C-terminus); the interaction is direct and promotes the association of PSME3 with the 20S proteasome. Interacts with COIL; the interaction is inhibited by PSME3IP1. Post-translationally, phosphorylated by MAP3K3. Phosphorylation at Ser-247 promotes its association with CCAR2. Acetylation at the major site Lys-195 is important for oligomerization and ability to degrade its target substrates. Deacetylated by SIRT1.

Its subcellular location is the nucleus. The protein resides in the cytoplasm. Functionally, subunit of the 11S REG-gamma (also called PA28-gamma) proteasome regulator, a doughnut-shaped homoheptamer which associates with the proteasome. 11S REG-gamma activates the trypsin-like catalytic subunit of the proteasome but inhibits the chymotrypsin-like and postglutamyl-preferring (PGPH) subunits. Facilitates the MDM2-p53/TP53 interaction which promotes ubiquitination- and MDM2-dependent proteasomal degradation of p53/TP53, limiting its accumulation and resulting in inhibited apoptosis after DNA damage. May also be involved in cell cycle regulation. Mediates CCAR2 and CHEK2-dependent SIRT1 inhibition. In Pongo abelii (Sumatran orangutan), this protein is Proteasome activator complex subunit 3 (PSME3).